The primary structure comprises 22 residues: Conantokin-Oc (22 aa).

The disordered stretch occupies residues 1 to 22 (GEEERKAMAELEAKKAQEALKA). Glu3, Glu4, Glu10, and Glu18 each carry 4-carboxyglutamate.

Expressed by the venom duct.

It is found in the secreted. Conantokins inhibit N-methyl-D-aspartate (NMDA) receptors. The protein is Conantokin-Oc of Conus ochroleucus (Perfect cone).